The following is a 924-amino-acid chain: DNA polymerase (924 aa).

Residues 235–386 (YPMSQQPKIV…DDCDVTFRLS (152 aa)) form the 3'-5' exonuclease domain.

This sequence belongs to the DNA polymerase type-A family.

The enzyme catalyses DNA(n) + a 2'-deoxyribonucleoside 5'-triphosphate = DNA(n+1) + diphosphate. Functionally, replicates viral genomic DNA. This polymerase possesses two enzymatic activities: DNA synthesis (polymerase) and an exonucleolytic activity that degrades single-stranded DNA in the 3'-5' direction. In Bacillus phage SP01 (Bacteriophage SP01), this protein is DNA polymerase (31).